A 153-amino-acid polypeptide reads, in one-letter code: MGEKLICNNKKAFHDFFIEERFEAGMVLKGTEVKSLRDGKANLNDSFALIRNGEIFLHNLHINPYAFGNRENHDPDRLRKLLMHKKEIEKLFGKIREKGYSVVPLRLYFKNGLAKVELGLAKGKKLYDKREDMKKKDQSREMAQALREKSKSH.

The segment at 129-153 (KREDMKKKDQSREMAQALREKSKSH) is disordered.

Belongs to the SmpB family.

It localises to the cytoplasm. Required for rescue of stalled ribosomes mediated by trans-translation. Binds to transfer-messenger RNA (tmRNA), required for stable association of tmRNA with ribosomes. tmRNA and SmpB together mimic tRNA shape, replacing the anticodon stem-loop with SmpB. tmRNA is encoded by the ssrA gene; the 2 termini fold to resemble tRNA(Ala) and it encodes a 'tag peptide', a short internal open reading frame. During trans-translation Ala-aminoacylated tmRNA acts like a tRNA, entering the A-site of stalled ribosomes, displacing the stalled mRNA. The ribosome then switches to translate the ORF on the tmRNA; the nascent peptide is terminated with the 'tag peptide' encoded by the tmRNA and targeted for degradation. The ribosome is freed to recommence translation, which seems to be the essential function of trans-translation. The polypeptide is SsrA-binding protein (Geobacter sulfurreducens (strain ATCC 51573 / DSM 12127 / PCA)).